The following is a 246-amino-acid chain: DNA repair protein RecO (246 aa).

Belongs to the RecO family.

In terms of biological role, involved in DNA repair and RecF pathway recombination. This chain is DNA repair protein RecO, found in Bifidobacterium adolescentis (strain ATCC 15703 / DSM 20083 / NCTC 11814 / E194a).